A 205-amino-acid chain; its full sequence is Holliday junction resolvase RecU (205 aa).

Positions 83, 85, 98, and 117 each coordinate Mg(2+).

Belongs to the RecU family. It depends on Mg(2+) as a cofactor.

Its subcellular location is the cytoplasm. It carries out the reaction Endonucleolytic cleavage at a junction such as a reciprocal single-stranded crossover between two homologous DNA duplexes (Holliday junction).. Endonuclease that resolves Holliday junction intermediates in genetic recombination. Cleaves mobile four-strand junctions by introducing symmetrical nicks in paired strands. Promotes annealing of linear ssDNA with homologous dsDNA. Required for DNA repair, homologous recombination and chromosome segregation. The polypeptide is Holliday junction resolvase RecU (Streptococcus suis (strain 98HAH33)).